The chain runs to 317 residues: Nicotianamine synthase (317 aa).

This sequence belongs to the nicotianamine synthase (NAS)-like family. In terms of assembly, homomultimer. As to expression, leaves and roots.

It carries out the reaction 3 S-adenosyl-L-methionine = nicotianamine + 3 S-methyl-5'-thioadenosine + 3 H(+). Synthesizes nicotianamine, a polyamine that serves as a sensor for the physiological iron status within the plant, and/or might be involved in the transport of iron. The protein is Nicotianamine synthase (CHLN) of Solanum lycopersicum (Tomato).